A 273-amino-acid chain; its full sequence is Type II pantothenate kinase (273 aa).

8–15 (DAGGTLTK) contributes to the ATP binding site. Glu76 (proton acceptor) is an active-site residue. ATP is bound by residues Thr105, 127-131 (GGTIM), Phe143, and Ser230.

This sequence belongs to the type II pantothenate kinase family. Homodimer.

Its subcellular location is the cytoplasm. It carries out the reaction (R)-pantothenate + ATP = (R)-4'-phosphopantothenate + ADP + H(+). Its pathway is cofactor biosynthesis; coenzyme A biosynthesis; CoA from (R)-pantothenate: step 1/5. Functionally, catalyzes the phosphorylation of pantothenate (Pan), the first step in CoA biosynthesis. This chain is Type II pantothenate kinase, found in Bacillus cereus (strain ATCC 14579 / DSM 31 / CCUG 7414 / JCM 2152 / NBRC 15305 / NCIMB 9373 / NCTC 2599 / NRRL B-3711).